The chain runs to 168 residues: uncharacterized protein (168 aa).

The segment at 18–73 (RTTVKTKSHNPKTLYPNNKPRWESKLHAGPKGFQSSRTSEKPGRPDPDPEDDPPIP) is disordered. Residues 55–64 (TSEKPGRPDP) show a composition bias toward basic and acidic residues. The next 2 membrane-spanning stretches (helical) occupy residues 84-104 (IVVSVGTPLGLGVAILKVLEV) and 113-133 (VPLWVPYLTTLVTFGSSALGI).

It localises to the membrane. This is an uncharacterized protein from Arabidopsis thaliana (Mouse-ear cress).